Reading from the N-terminus, the 318-residue chain is NADH-ubiquinone oxidoreductase chain 1 (318 aa).

Helical transmembrane passes span 2 to 22 (FMIN…FLTL), 68 to 88 (ISMF…MWTP), 100 to 120 (LGVL…LWSG), 146 to 166 (LAII…PTLI), 171 to 191 (HMWL…STLA), 222 to 242 (LFFL…TILF), 253 to 273 (ELYT…FLWV), and 293 to 313 (FLPL…ITAG).

Belongs to the complex I subunit 1 family. In terms of assembly, core subunit of respiratory chain NADH dehydrogenase (Complex I) which is composed of 45 different subunits.

It is found in the mitochondrion inner membrane. It catalyses the reaction a ubiquinone + NADH + 5 H(+)(in) = a ubiquinol + NAD(+) + 4 H(+)(out). Its function is as follows. Core subunit of the mitochondrial membrane respiratory chain NADH dehydrogenase (Complex I) which catalyzes electron transfer from NADH through the respiratory chain, using ubiquinone as an electron acceptor. Essential for the catalytic activity and assembly of complex I. In Hipposideros diadema (Diadem leaf-nosed bat), this protein is NADH-ubiquinone oxidoreductase chain 1 (MT-ND1).